Consider the following 257-residue polypeptide: Deoxyribose-phosphate aldolase (257 aa).

D102 acts as the Proton donor/acceptor in catalysis. Residue K166 is the Schiff-base intermediate with acetaldehyde of the active site. Residue K198 is the Proton donor/acceptor of the active site.

Belongs to the DeoC/FbaB aldolase family. DeoC type 2 subfamily.

It localises to the cytoplasm. It catalyses the reaction 2-deoxy-D-ribose 5-phosphate = D-glyceraldehyde 3-phosphate + acetaldehyde. Its pathway is carbohydrate degradation; 2-deoxy-D-ribose 1-phosphate degradation; D-glyceraldehyde 3-phosphate and acetaldehyde from 2-deoxy-alpha-D-ribose 1-phosphate: step 2/2. Its function is as follows. Catalyzes a reversible aldol reaction between acetaldehyde and D-glyceraldehyde 3-phosphate to generate 2-deoxy-D-ribose 5-phosphate. This is Deoxyribose-phosphate aldolase from Aeromonas hydrophila subsp. hydrophila (strain ATCC 7966 / DSM 30187 / BCRC 13018 / CCUG 14551 / JCM 1027 / KCTC 2358 / NCIMB 9240 / NCTC 8049).